The chain runs to 300 residues: Protoheme IX farnesyltransferase (300 aa).

The next 9 membrane-spanning stretches (helical) occupy residues 31 to 51, 52 to 72, 92 to 112, 123 to 145, 152 to 172, 179 to 199, 225 to 245, 247 to 267, and 280 to 300; these read VMSLVVFTGFSGMWLAPNSLH, PFISVIALICIAIGAGSAGAI, IVRGAIEADEALSFGLIMAFF, FLSALLLLFTIFYYICIYTMWLK, IVIGGAAGALPPVIGYASVSG, VILFLIIFIWTPPHSWALALF, ILIYSVLLFLTSLMPFFVGMS, IIYLVIAAVLGLVFLYYSISL, and FFAYSIFYLFFIFLLLDFCRV.

Belongs to the UbiA prenyltransferase family. Protoheme IX farnesyltransferase subfamily.

The protein localises to the cell inner membrane. The catalysed reaction is heme b + (2E,6E)-farnesyl diphosphate + H2O = Fe(II)-heme o + diphosphate. Its pathway is porphyrin-containing compound metabolism; heme O biosynthesis; heme O from protoheme: step 1/1. Functionally, converts heme B (protoheme IX) to heme O by substitution of the vinyl group on carbon 2 of heme B porphyrin ring with a hydroxyethyl farnesyl side group. The sequence is that of Protoheme IX farnesyltransferase from Rickettsia bellii (strain OSU 85-389).